A 399-amino-acid polypeptide reads, in one-letter code: Glutamyl-tRNA reductase (399 aa).

Substrate contacts are provided by residues 45-48 (TCNR), Ser101, 106-108 (EDQ), and Gln112. Cys46 functions as the Nucleophile in the catalytic mechanism. 177-182 (GFGKIG) provides a ligand contact to NADP(+).

The protein belongs to the glutamyl-tRNA reductase family. Homodimer.

It catalyses the reaction (S)-4-amino-5-oxopentanoate + tRNA(Glu) + NADP(+) = L-glutamyl-tRNA(Glu) + NADPH + H(+). The protein operates within porphyrin-containing compound metabolism; protoporphyrin-IX biosynthesis; 5-aminolevulinate from L-glutamyl-tRNA(Glu): step 1/2. Functionally, catalyzes the NADPH-dependent reduction of glutamyl-tRNA(Glu) to glutamate 1-semialdehyde (GSA). The polypeptide is Glutamyl-tRNA reductase (Clostridium kluyveri (strain ATCC 8527 / DSM 555 / NBRC 12016 / NCIMB 10680 / K1)).